The primary structure comprises 106 residues: U1-lycotoxin-Ls1b (106 aa).

Residues 1-19 form the signal peptide; that stretch reads MKVLVVVALLVTLISYSSS. Positions 20-40 are excised as a propeptide; it reads EGIDDLEADELLSLMANEQTR. 4 cysteine pairs are disulfide-bonded: Cys43–Cys58, Cys50–Cys67, Cys57–Cys85, and Cys69–Cys83.

This sequence belongs to the neurotoxin 19 (CSTX) family. 04 (U1-Lctx) subfamily. In terms of tissue distribution, expressed by the venom gland.

It localises to the secreted. This chain is U1-lycotoxin-Ls1b, found in Lycosa singoriensis (Wolf spider).